The primary structure comprises 752 residues: Zinc finger protein 184 (752 aa).

The 72-residue stretch at 28–99 folds into the KRAB domain; it reads VTFKDVIVDF…EPSIPVGTPG (72 aa). Ser-117, Ser-122, and Ser-200 each carry phosphoserine. Residue Lys-207 forms a Glycyl lysine isopeptide (Lys-Gly) (interchain with G-Cter in SUMO2) linkage. C2H2-type zinc fingers lie at residues 223–245, 251–273, 279–301, 307–329, 335–357, 363–385, 391–413, 419–441, 447–469, 475–497, 503–525, 531–553, 559–581, 587–609, 615–637, 643–665, 671–693, 699–721, and 727–749; these read CKCN…QRTH, YKCN…QRIH, YKCD…QRIH, YTCN…QKIH, FKCD…QKIH, YKCN…HMIH, YECN…QKTH, YDCA…LKIH, YKCN…RRIH, FECS…QKTH, YECK…ERIH, YQCH…RKIH, YKCN…KRIH, YECA…QKTH, YHCN…QRIH, YKCN…QNTH, YNCN…QRIH, and FGCN…QRLH.

The protein belongs to the krueppel C2H2-type zinc-finger protein family.

It localises to the nucleus. Functionally, may be involved in transcriptional regulation. This chain is Zinc finger protein 184 (ZNF184), found in Bos taurus (Bovine).